A 208-amino-acid chain; its full sequence is Uracil phosphoribosyltransferase (208 aa).

Residues arginine 78, arginine 103, and 130-138 contribute to the 5-phospho-alpha-D-ribose 1-diphosphate site; that span reads DPMLATGGS. Uracil is bound by residues isoleucine 193 and 198 to 200; that span reads GDA. Aspartate 199 lines the 5-phospho-alpha-D-ribose 1-diphosphate pocket.

The protein belongs to the UPRTase family. The cofactor is Mg(2+).

It carries out the reaction UMP + diphosphate = 5-phospho-alpha-D-ribose 1-diphosphate + uracil. It functions in the pathway pyrimidine metabolism; UMP biosynthesis via salvage pathway; UMP from uracil: step 1/1. Allosterically activated by GTP. Functionally, catalyzes the conversion of uracil and 5-phospho-alpha-D-ribose 1-diphosphate (PRPP) to UMP and diphosphate. The sequence is that of Uracil phosphoribosyltransferase from Salmonella agona (strain SL483).